Here is a 538-residue protein sequence, read N- to C-terminus: Syncytin-1 (538 aa).

The first 20 residues, 1-20 (MALPYHIFLFTVLLPSFTLT), serve as a signal peptide directing secretion. Over 31-443 (SSPYQEFLWR…NIGPWGLLSQ (413 aa)) the chain is Extracellular. Asn169 carries N-linked (GlcNAc...) asparagine glycosylation. The CXXC signature appears at 186-189 (CWMC). Cystine bridges form between Cys186-Cys189, Cys186-Cys405, and Cys397-Cys404. Residues Asn208, Asn214, Asn234, Asn242, and Asn281 are each glycosylated (N-linked (GlcNAc...) asparagine). Residues 320–340 (ILPFVMGAGVLGALGTGIGSI) form a fusion peptide region. The interval 380–396 (LQNRRALDLLTAERGGT) is immunosuppression. The CX6CC motif lies at 397–405 (CLFLGEECC). N-linked (GlcNAc...) asparagine glycosylation occurs at Asn409. Residues 444-464 (WMPWILPFLGPLAAIILLLLF) traverse the membrane as a helical segment. Residues 465 to 484 (GPCIFNLLVNFVSSRIEAIK) form an essential for the fusiogenic function region. The Cytoplasmic portion of the chain corresponds to 465-538 (GPCIFNLLVN…LLRPNSAGSS (74 aa)). Residues 494-538 (KTKNYRRSLDWPASPRSDVNDIKGIPPEEISTAQPLLRPNSAGSS) are disordered.

This sequence belongs to the gamma type-C retroviral envelope protein family. HERV class-I W env subfamily. In terms of assembly, the mature envelope protein (Env) consists of a trimer of SU-TM heterodimers attached probably by a labile interchain disulfide bond. Interacts with the C-type lectin CD209/DC-SIGN. Post-translationally, specific enzymatic cleavages in vivo yield mature proteins. Envelope glycoproteins are synthesized as an inactive precursor that is heavily N-glycosylated and processed likely by furin in the Golgi to yield the mature SU and TM proteins. The cleavage site between SU and TM requires the minimal sequence [KR]-X-[KR]-R. In terms of processing, the CXXC motif is highly conserved across a broad range of retroviral envelope proteins. It is thought to participate in the formation of a labile disulfide bond possibly with the CX6CC motif present in the transmembrane protein.

Its subcellular location is the cell membrane. The protein resides in the virion. This endogenous retroviral envelope protein has retained its original fusogenic properties and participates in trophoblast fusion and the formation of a syncytium during placenta morphogenesis. May recognize and induce fusion through binding of SLC1A4 and SLC1A5. In terms of biological role, endogenous envelope proteins may have kept, lost or modified their original function during evolution. Retroviral envelope proteins mediate receptor recognition and membrane fusion during early infection. The surface protein (SU) mediates receptor recognition, while the transmembrane protein (TM) acts as a class I viral fusion protein. The protein may have at least 3 conformational states: pre-fusion native state, pre-hairpin intermediate state, and post-fusion hairpin state. During viral and target cell membrane fusion, the coiled coil regions (heptad repeats) assume a trimer-of-hairpins structure, positioning the fusion peptide in close proximity to the C-terminal region of the ectodomain. The formation of this structure appears to drive apposition and subsequent fusion of membranes. The protein is Syncytin-1 (ERVW-1) of Hylobates pileatus (Pileated gibbon).